A 503-amino-acid chain; its full sequence is Anhydrotetracycline monooxygenase (503 aa).

The protein belongs to the PheA/TfdB FAD monooxygenase family. It depends on FAD as a cofactor.

The catalysed reaction is anhydrotetracycline + NADPH + O2 + H(+) = 5a,11a-dehydrotetracycline + NADP(+) + H2O. The protein operates within antibiotic biosynthesis; oxytetracycline biosynthesis. Functionally, catalyzes hydroxylation of the anthracycline structure at position C-6 during the biosynthesis of oxytetracyline. This Streptomyces rimosus protein is Anhydrotetracycline monooxygenase.